The following is a 410-amino-acid chain: Sorting nexin-4 (410 aa).

A PX domain is found at 11–135 (FIIVSDPQKQ…TFLVSSDWDA (125 aa)). Positions 58, 60, 84, and 101 each coordinate a 1,2-diacyl-sn-glycero-3-phospho-(1D-myo-inositol-3-phosphate). Residues 329–368 (NQEAARREKISKLESKVQALTTEVENAKKVADAFEKEALK) are a coiled coil.

The protein belongs to the sorting nexin family.

It localises to the cytoplasm. Its subcellular location is the cytosol. The protein localises to the preautophagosomal structure membrane. The protein resides in the endosome membrane. Its function is as follows. Sorting nexin, involved in the separation or division of vacuoles throughout the entire life cycle of the cells. Involved in retrieval of late-Golgi SNAREs from post-Golgi endosomes to the trans-Golgi network, for cytoplasm to vacuole transport (Cvt), and autophagy of large cargos including mitophagy, pexophagy and glycophagy. The chain is Sorting nexin-4 (SNX4) from Eremothecium gossypii (strain ATCC 10895 / CBS 109.51 / FGSC 9923 / NRRL Y-1056) (Yeast).